Consider the following 352-residue polypeptide: Ferrochelatase (352 aa).

Fe cation-binding residues include His222 and Glu303.

It belongs to the ferrochelatase family.

It localises to the cytoplasm. The catalysed reaction is heme b + 2 H(+) = protoporphyrin IX + Fe(2+). It functions in the pathway porphyrin-containing compound metabolism; protoheme biosynthesis; protoheme from protoporphyrin-IX: step 1/1. Functionally, catalyzes the ferrous insertion into protoporphyrin IX. This chain is Ferrochelatase, found in Brucella abortus (strain S19).